A 253-amino-acid polypeptide reads, in one-letter code: uncharacterized protein (253 aa).

The N-terminal stretch at 1–25 (MRKKKFLSKVSFGSLFLLCGTVLSA) is a signal peptide. Cysteine 26 carries the N-palmitoyl cysteine lipid modification. Cysteine 26 carries the S-diacylglycerol cysteine lipid modification.

The protein belongs to the MG439/MG440 family.

It is found in the cell membrane. This is an uncharacterized protein from Mycoplasma pneumoniae (strain ATCC 29342 / M129 / Subtype 1) (Mycoplasmoides pneumoniae).